Reading from the N-terminus, the 147-residue chain is Large ribosomal subunit protein uL16 (147 aa).

It belongs to the universal ribosomal protein uL16 family. As to quaternary structure, part of the 50S ribosomal subunit.

Functionally, binds 23S rRNA and is also seen to make contacts with the A and possibly P site tRNAs. The sequence is that of Large ribosomal subunit protein uL16 from Clostridium acetobutylicum (strain ATCC 824 / DSM 792 / JCM 1419 / IAM 19013 / LMG 5710 / NBRC 13948 / NRRL B-527 / VKM B-1787 / 2291 / W).